A 920-amino-acid polypeptide reads, in one-letter code: Dynamin-B (920 aa).

A disordered region spans residues 65–84; it reads NSNNNNNNNNNNKINKNNNN. The 295-residue stretch at 154 to 448 folds into the Dynamin-type G domain; it reads EITLPQIIVV…LTKHIRDTFP (295 aa). The G1 motif stretch occupies residues 164-171; sequence GSQSSGKS. GTP is bound at residue 164-172; it reads GSQSSGKSS. A G2 motif region spans residues 190-192; that stretch reads VTR. The segment at 204–241 is disordered; sequence TTSRNNVNENEDEDEDDNYYDNDNDDNSLEEWGEFGHT. Residues 212–236 are compositionally biased toward acidic residues; it reads ENEDEDEDDNYYDNDNDDNSLEEWG. The tract at residues 290–293 is G3 motif; sequence DLPG. Residues 359 to 362 form a G4 motif region; it reads TKLD. Residues 359–365 and 390–393 contribute to the GTP site; these read TKLDLMD and NRSQ. Residues 389 to 392 are G5 motif; it reads VNRS. A disordered region spans residues 680 to 790; it reads FQSTSSTSSS…EIQIQQQQQQ (111 aa). Composition is skewed to low complexity over residues 681-705 and 724-751; these read QSTSSTSSSPTSSSSSLPLPQNSNP and QIKQQQQQQQQQQQQSYQQQQQQQQKQQ. The stretch at 724-751 forms a coiled coil; that stretch reads QIKQQQQQQQQQQQQSYQQQQQQQQKQQ. Positions 765-774 are enriched in pro residues; it reads PPSPPSPPQP. Low complexity predominate over residues 775 to 790; that stretch reads KQQQSHEIQIQQQQQQ. One can recognise a GED domain in the interval 825–916; the sequence is IYLLRRLLLA…SLSQSENSDL (92 aa).

This sequence belongs to the TRAFAC class dynamin-like GTPase superfamily. Dynamin/Fzo/YdjA family.

The protein localises to the cytoplasm. Its function is as follows. Enzyme hydrolyzing GTP. In Dictyostelium discoideum (Social amoeba), this protein is Dynamin-B (dymB).